We begin with the raw amino-acid sequence, 288 residues long: MSALDDLPPLRDVIRRHGLSAQKSLGQNFLLDLNLTGRIARASGPLEGATVVEVGPGPGGLTRALLALGARRVIAIERDQRCLDALAEVSDHYPGRLEVISGDALKVDVRPLVGDGEVRVVANLPYNIATLLLIGWLSTDPWPPWFSSLTLMFQKEVAERIVAAPGSKAYGRLAVLAGWRTTARIAFDVAPSAFVPPPKVTSSVVHLVPRSEPLPCALSALEKVTEAAFGQRRKMLRQSLKSLGVDTAALLKATGVEETARAEEIDVDGFVRLANTFAQLKSGAGAAA.

Residues Asn-28, Leu-30, Gly-55, Glu-77, Asp-103, and Asn-123 each contribute to the S-adenosyl-L-methionine site.

Belongs to the class I-like SAM-binding methyltransferase superfamily. rRNA adenine N(6)-methyltransferase family. RsmA subfamily.

It is found in the cytoplasm. The enzyme catalyses adenosine(1518)/adenosine(1519) in 16S rRNA + 4 S-adenosyl-L-methionine = N(6)-dimethyladenosine(1518)/N(6)-dimethyladenosine(1519) in 16S rRNA + 4 S-adenosyl-L-homocysteine + 4 H(+). Specifically dimethylates two adjacent adenosines (A1518 and A1519) in the loop of a conserved hairpin near the 3'-end of 16S rRNA in the 30S particle. May play a critical role in biogenesis of 30S subunits. This chain is Ribosomal RNA small subunit methyltransferase A, found in Xanthobacter autotrophicus (strain ATCC BAA-1158 / Py2).